The following is a 92-amino-acid chain: Small ribosomal subunit protein bS18c (92 aa).

It belongs to the bacterial ribosomal protein bS18 family. Part of the 30S ribosomal subunit.

The protein resides in the plastid. This Epifagus virginiana (Beechdrops) protein is Small ribosomal subunit protein bS18c (rps18).